Here is a 611-residue protein sequence, read N- to C-terminus: Chloroplast sensor kinase, chloroplastic (611 aa).

The transit peptide at Met1–Ser79 directs the protein to the chloroplast. Positions Asn17 to Ser50 are disordered. The segment covering Ser40–Ser50 has biased composition (low complexity). Residues Asp116–Gln300 are GAF. Cys121 serves as a coordination point for [3Fe-4S] cluster. Ser188 is subject to Phosphoserine. Positions Lys312–Pro602 constitute a Histidine kinase domain. Residues Val345–Ala380 are a coiled coil. A compositionally biased stretch (basic and acidic residues) spans Asn385–Ile402. A disordered region spans residues Asn385–Asp420.

This sequence belongs to the chloroplast sensor kinase protein family. As to quaternary structure, self-interacts. Interacts with the plastoquinone analog 2,5-dibromo-3-methyl-5-isopropyl-p-benzoquinone (DBMIB) and with SIGA/SIG1. Requires [3Fe-4S] cluster as cofactor. Post-translationally, autophosphorylated, possibly on tyrosine residues, in photosystem I (PS I) light and in the presence of manganese ions Mn(2+), to a lesser degree, in the presence of calcium ions Ca(2+), but not in the presence of magnesium ions Mg(2+). Dithiothreitol (DTT) stimulates autophosphorylation. Phosphorylated on Ser-188 in vivo after exposure to far-red light (when plastoquinone (PQ) is oxidized). Not phosphorylated under orange light (reduces PQ).

The protein localises to the plastid. It localises to the chloroplast stroma. It carries out the reaction L-tyrosyl-[protein] + ATP = O-phospho-L-tyrosyl-[protein] + ADP + H(+). In terms of biological role, sensor kinase that senses the plastoquinone (PQ) redox state involved in stoichiometry adjustment of both photosystems (e.g. long-term adaptation via transcriptional regulation of reaction center genes of photosystems I and II) and state transitions (e.g. short-term adaptation involving reversible post-translational phosphorylation of light-harvesting complex II, LHC II), thus linking photosynthesis with gene expression in chloroplasts. Autophosphorylates, probably on a tyrosine residue. Probably phosphorylates SIGA/SIG1 in response to plastoquinone redox state modification. Reduced PQ suppresses its autophosphorylation activity. Represses expression of a number of chloroplast-encoded genes. This Arabidopsis thaliana (Mouse-ear cress) protein is Chloroplast sensor kinase, chloroplastic.